Consider the following 116-residue polypeptide: Large ribosomal subunit protein bL17 (116 aa).

It belongs to the bacterial ribosomal protein bL17 family. Part of the 50S ribosomal subunit. Contacts protein L32.

This is Large ribosomal subunit protein bL17 from Dictyoglomus turgidum (strain DSM 6724 / Z-1310).